The chain runs to 218 residues: Uracil-DNA glycosylase (218 aa).

The active-site Proton acceptor is D59.

Belongs to the uracil-DNA glycosylase (UDG) superfamily. UNG family.

It localises to the cytoplasm. The catalysed reaction is Hydrolyzes single-stranded DNA or mismatched double-stranded DNA and polynucleotides, releasing free uracil.. In terms of biological role, excises uracil residues from the DNA which can arise as a result of misincorporation of dUMP residues by DNA polymerase or due to deamination of cytosine. This Staphylococcus aureus (strain JH1) protein is Uracil-DNA glycosylase.